Consider the following 258-residue polypeptide: Fibroblast growth factor-binding protein 3 (258 aa).

Residues 1 to 26 (MTPPKLRASLSPSLLLLLSGCLLAAA) form the signal peptide. 2 disulfides stabilise this stretch: Cys-59–Cys-80 and Cys-90–Cys-124. A disordered region spans residues 146-231 (RLVPRASPPA…GTGPDPDGLD (86 aa)). The span at 186 to 197 (GTPPPQSAPPKE) shows a compositional bias: pro residues. Residues 198-209 (NPSERKTNEGKR) are compositionally biased toward basic and acidic residues. Residues Cys-241 and Cys-249 are joined by a disulfide bond.

Belongs to the fibroblast growth factor-binding protein family. Interacts with FGF2.

It localises to the secreted. In terms of biological role, heparin-binding protein which binds to FGF2, prevents binding of FGF2 to heparin and probably inhibits immobilization of FGF2 on extracellular matrix glycosaminoglycans, allowing its release and subsequent activation of FGFR signaling which leads to increased vascular permeability. This chain is Fibroblast growth factor-binding protein 3 (FGFBP3), found in Homo sapiens (Human).